The primary structure comprises 299 residues: Acetylglutamate kinase (299 aa).

Substrate is bound by residues 64-65 (GG), Arg-86, and Asn-197.

The protein belongs to the acetylglutamate kinase family. ArgB subfamily.

It localises to the cytoplasm. The catalysed reaction is N-acetyl-L-glutamate + ATP = N-acetyl-L-glutamyl 5-phosphate + ADP. The protein operates within amino-acid biosynthesis; L-arginine biosynthesis; N(2)-acetyl-L-ornithine from L-glutamate: step 2/4. Its function is as follows. Catalyzes the ATP-dependent phosphorylation of N-acetyl-L-glutamate. The polypeptide is Acetylglutamate kinase (Persephonella marina (strain DSM 14350 / EX-H1)).